The primary structure comprises 380 residues: Flap endonuclease 1 (380 aa).

Positions 1–104 (MGIQGLAKLI…GELAKRAERR (104 aa)) are N-domain. Asp-34 provides a ligand contact to Mg(2+). DNA contacts are provided by Arg-47 and Arg-70. Mg(2+)-binding residues include Asp-86, Glu-158, Glu-160, Asp-179, and Asp-181. The segment at 122 to 253 (DVNKFQKRLV…KRAIELIRQY (132 aa)) is I-domain. Glu-158 lines the DNA pocket. Positions 231 and 233 each coordinate DNA. Asp-233 contacts Mg(2+). The disordered stretch occupies residues 328–380 (LKNARHTSTQGRLDSFFKVMSSPSVKRKEPPKGAKGSASKKAKMSGGKFKKPK). The interaction with PCNA stretch occupies residues 336–344 (TQGRLDSFF). The segment covering 365-380 (ASKKAKMSGGKFKKPK) has biased composition (basic residues).

It belongs to the XPG/RAD2 endonuclease family. FEN1 subfamily. In terms of assembly, interacts with PCNA. Three molecules of FEN1 bind to one PCNA trimer with each molecule binding to one PCNA monomer. PCNA stimulates the nuclease activity without altering cleavage specificity. Requires Mg(2+) as cofactor. In terms of processing, phosphorylated. Phosphorylation upon DNA damage induces relocalization to the nuclear plasma.

The protein resides in the nucleus. Its subcellular location is the nucleolus. The protein localises to the nucleoplasm. It is found in the mitochondrion. Its function is as follows. Structure-specific nuclease with 5'-flap endonuclease and 5'-3' exonuclease activities involved in DNA replication and repair. During DNA replication, cleaves the 5'-overhanging flap structure that is generated by displacement synthesis when DNA polymerase encounters the 5'-end of a downstream Okazaki fragment. It enters the flap from the 5'-end and then tracks to cleave the flap base, leaving a nick for ligation. Also involved in the long patch base excision repair (LP-BER) pathway, by cleaving within the apurinic/apyrimidinic (AP) site-terminated flap. Acts as a genome stabilization factor that prevents flaps from equilibrating into structures that lead to duplications and deletions. Also possesses 5'-3' exonuclease activity on nicked or gapped double-stranded DNA, and exhibits RNase H activity. Also involved in replication and repair of rDNA and in repairing mitochondrial DNA. The polypeptide is Flap endonuclease 1 (Branchiostoma floridae (Florida lancelet)).